The sequence spans 421 residues: UDP-N-acetylglucosamine 1-carboxyvinyltransferase (421 aa).

22 to 23 is a binding site for phosphoenolpyruvate; that stretch reads KN. Residue arginine 93 participates in UDP-N-acetyl-alpha-D-glucosamine binding. Cysteine 117 serves as the catalytic Proton donor. Cysteine 117 carries the post-translational modification 2-(S-cysteinyl)pyruvic acid O-phosphothioketal. UDP-N-acetyl-alpha-D-glucosamine is bound by residues 122–126, aspartate 308, and isoleucine 330; that span reads RPVDL.

This sequence belongs to the EPSP synthase family. MurA subfamily.

It is found in the cytoplasm. The catalysed reaction is phosphoenolpyruvate + UDP-N-acetyl-alpha-D-glucosamine = UDP-N-acetyl-3-O-(1-carboxyvinyl)-alpha-D-glucosamine + phosphate. It participates in cell wall biogenesis; peptidoglycan biosynthesis. Functionally, cell wall formation. Adds enolpyruvyl to UDP-N-acetylglucosamine. This is UDP-N-acetylglucosamine 1-carboxyvinyltransferase from Pseudomonas fluorescens (strain SBW25).